Reading from the N-terminus, the 195-residue chain is Large ribosomal subunit protein bL9 (195 aa).

Belongs to the bacterial ribosomal protein bL9 family.

Its function is as follows. Binds to the 23S rRNA. The sequence is that of Large ribosomal subunit protein bL9 from Rhodopseudomonas palustris (strain TIE-1).